The following is a 140-amino-acid chain: ATP synthase epsilon chain (140 aa).

This sequence belongs to the ATPase epsilon chain family. In terms of assembly, F-type ATPases have 2 components, CF(1) - the catalytic core - and CF(0) - the membrane proton channel. CF(1) has five subunits: alpha(3), beta(3), gamma(1), delta(1), epsilon(1). CF(0) has three main subunits: a, b and c.

The protein resides in the cell inner membrane. Produces ATP from ADP in the presence of a proton gradient across the membrane. In Laribacter hongkongensis (strain HLHK9), this protein is ATP synthase epsilon chain.